The primary structure comprises 333 residues: Ketol-acid reductoisomerase (NADP(+)) (333 aa).

The region spanning 2–182 is the KARI N-terminal Rossmann domain; the sequence is AKMYYDSDAS…GCTRAGVLET (181 aa). NADP(+) contacts are provided by residues 25–28, Arg48, Ser51, and 83–86; these read YGSQ and DERQ. The active site involves His108. Gly134 provides a ligand contact to NADP(+). Positions 183-328 constitute a KARI C-terminal knotted domain; that stretch reads TFKEETETDL…AELRAMMPFI (146 aa). Asp191, Glu195, Glu227, and Glu231 together coordinate Mg(2+). A substrate-binding site is contributed by Ser252.

The protein belongs to the ketol-acid reductoisomerase family. It depends on Mg(2+) as a cofactor.

The enzyme catalyses (2R)-2,3-dihydroxy-3-methylbutanoate + NADP(+) = (2S)-2-acetolactate + NADPH + H(+). It catalyses the reaction (2R,3R)-2,3-dihydroxy-3-methylpentanoate + NADP(+) = (S)-2-ethyl-2-hydroxy-3-oxobutanoate + NADPH + H(+). It functions in the pathway amino-acid biosynthesis; L-isoleucine biosynthesis; L-isoleucine from 2-oxobutanoate: step 2/4. The protein operates within amino-acid biosynthesis; L-valine biosynthesis; L-valine from pyruvate: step 2/4. Functionally, involved in the biosynthesis of branched-chain amino acids (BCAA). Catalyzes an alkyl-migration followed by a ketol-acid reduction of (S)-2-acetolactate (S2AL) to yield (R)-2,3-dihydroxy-isovalerate. In the isomerase reaction, S2AL is rearranged via a Mg-dependent methyl migration to produce 3-hydroxy-3-methyl-2-ketobutyrate (HMKB). In the reductase reaction, this 2-ketoacid undergoes a metal-dependent reduction by NADPH to yield (R)-2,3-dihydroxy-isovalerate. This is Ketol-acid reductoisomerase (NADP(+)) from Desulfitobacterium hafniense (strain DSM 10664 / DCB-2).